The primary structure comprises 122 residues: Anti-sigma-F factor antagonist RsfB (122 aa).

Residues 7 to 115 (ITVTVADHNG…STLHDALTGV (109 aa)) form the STAS domain. Position 61 is a phosphoserine (Ser-61).

It belongs to the anti-sigma-factor antagonist family. As to quaternary structure, interacts with anti-sigma-F factor RsbW (UsfX). Its phosphorylation may prevent this interaction. Post-translationally, putative phosphorylation on Ser-61 may prevent interaction with RsbW.

Its function is as follows. Positive regulator of sigma-F (SigF) activity. Binds to anti-sigma-F factor RsbW (UsfX) preventing its binding to SigF, thus activating transcription. This Mycobacterium tuberculosis (strain CDC 1551 / Oshkosh) protein is Anti-sigma-F factor antagonist RsfB (rsfB).